A 1299-amino-acid chain; its full sequence is Cilia- and flagella-associated protein 251 (1299 aa).

The tract at residues 1 to 351 is disordered; sequence MSDTEENPLE…SQKPEDILAQ (351 aa). 3 stretches are compositionally biased toward acidic residues: residues 17–45, 91–162, and 176–189; these read EMEE…EEEE, EKEE…EEDA, and ESQE…EWVE. Basic and acidic residues predominate over residues 190-199; sequence KEEQREGEEV. Positions 212–228 are enriched in acidic residues; sequence EEEGWEEEKSGEEEKSE. A compositionally biased stretch (basic and acidic residues) spans 229–257; the sequence is ESERSKERGGEEEGQEKEEAEHEGEREEG. A compositionally biased stretch (acidic residues) spans 269 to 280; the sequence is REEEEEEEDTET. Basic and acidic residues-rich tracts occupy residues 281-297 and 331-351; these read TETK…EKQN and NSMK…ILAQ. 14 WD repeats span residues 484-526, 534-574, 585-624, 643-678, 681-741, 745-785, 791-828, 838-874, 881-924, 935-975, 981-1027, 1033-1071, 1109-1149, and 1169-1209; these read PVHT…IWKW, ACTL…CWFE, VLTE…VWDI, PRKL…FYDH, SVVN…VYHM, GTKL…VWDF, LFSR…ILDA, PFKY…MVVV, WEYL…EYNL, LDVH…LFNA, RKTL…ILPV, KTCA…QWKI, YFYY…FYPS, and GKLI…GYTN.

The protein localises to the cytoplasm. Its subcellular location is the cytoskeleton. It is found in the cilium axoneme. It localises to the cell projection. The protein resides in the cilium. The protein localises to the flagellum. Involved in spermatozoa motility. May also regulate cilium motility through its role in the assembly of the axonemal radial spokes. In Mus musculus (Mouse), this protein is Cilia- and flagella-associated protein 251.